A 241-amino-acid polypeptide reads, in one-letter code: MATPHINAQMGDFADVVLMPGDPLRAKYIAENFLDNAVQVCDVRNMFGYTGTYKGRKISVMGHGMGIPSCSIYVTELIKDYGVKKIIRVGSCGAVNEGIKVRDVVIGMGACTDSKVNRIRFKDHDFAAIADYKMVKAAEEAAKARGIDVKVGNLFSAELFYTPDPSMFDVMDKYGIVGVEMEAAGIYGVAAEYGAKALAICTVSDHIKTGEQTTSEERQNTFNEMIEIALDSVLIGDQAGY.

His-5 lines the a purine D-ribonucleoside pocket. Residues Gly-21, Arg-25, Arg-44, and 88–91 (RVGS) each bind phosphate. A purine D-ribonucleoside-binding positions include 180–182 (EME) and 204–205 (SD). Asp-205 (proton donor) is an active-site residue.

This sequence belongs to the PNP/UDP phosphorylase family. Homohexamer; trimer of homodimers.

It carries out the reaction a purine D-ribonucleoside + phosphate = a purine nucleobase + alpha-D-ribose 1-phosphate. The catalysed reaction is a purine 2'-deoxy-D-ribonucleoside + phosphate = a purine nucleobase + 2-deoxy-alpha-D-ribose 1-phosphate. In terms of biological role, catalyzes the reversible phosphorolytic breakdown of the N-glycosidic bond in the beta-(deoxy)ribonucleoside molecules, with the formation of the corresponding free purine bases and pentose-1-phosphate. The sequence is that of Purine nucleoside phosphorylase DeoD-type 1 from Vibrio cholerae serotype O1 (strain ATCC 39315 / El Tor Inaba N16961).